Consider the following 515-residue polypeptide: Galactose/methyl galactoside import ATP-binding protein MglA (515 aa).

2 consecutive ABC transporter domains span residues 8–243 (LEMR…VGRE) and 254–499 (IPKE…AKYL). Residue 40–47 (GENGAGKS) participates in ATP binding.

It belongs to the ABC transporter superfamily. Galactose/methyl galactoside importer (TC 3.A.1.2.3) family. In terms of assembly, the complex is composed of one ATP-binding protein (MglA), two transmembrane proteins (MglC) and a solute-binding protein (MglB).

The protein resides in the cell membrane. It catalyses the reaction D-galactose(out) + ATP + H2O = D-galactose(in) + ADP + phosphate + H(+). The catalysed reaction is methyl beta-D-galactoside(out) + ATP + H2O = methyl beta-D-galactoside(in) + ADP + phosphate + H(+). Its function is as follows. Part of the ABC transporter complex MglABC involved in galactose/methyl galactoside import. Responsible for energy coupling to the transport system. In Clostridium perfringens (strain ATCC 13124 / DSM 756 / JCM 1290 / NCIMB 6125 / NCTC 8237 / Type A), this protein is Galactose/methyl galactoside import ATP-binding protein MglA.